The following is a 538-amino-acid chain: ATP synthase subunit beta, mitochondrial (538 aa).

Position 215–222 (215–222) interacts with ATP; the sequence is GGAGVGKT.

This sequence belongs to the ATPase alpha/beta chains family. Subunit of the F-type ATPase which has 2 components, CF(1) - the catalytic core - and CF(0) - the membrane proton channel. Interacts (via N-terminus) with lov-1 (via PLAT domain). As to expression, expressed in three categories of adult male sensory neurons: tail ray B neurons, HOB hook neuron and head cephalic (CEM) neurons.

The protein resides in the cell projection. Its subcellular location is the cilium. The protein localises to the mitochondrion. It is found in the mitochondrion inner membrane. The catalysed reaction is ATP + H2O + 4 H(+)(in) = ADP + phosphate + 5 H(+)(out). In terms of biological role, mitochondrial membrane ATP synthase (F(1)F(0) ATP synthase or Complex V) produces ATP from ADP in the presence of a proton gradient across the membrane which is generated by electron transport complexes of the respiratory chain. F-type ATPases consist of two structural domains, F(1) - containing the extramembraneous catalytic core, and F(0) - containing the membrane proton channel, linked together by a central stalk and a peripheral stalk. During catalysis, ATP synthesis in the catalytic domain of F(1) is coupled via a rotary mechanism of the central stalk subunits to proton translocation. Subunits alpha and beta form the catalytic core in F(1). Rotation of the central stalk against the surrounding subunits leads to hydrolysis of ATP in three separate catalytic sites on the beta subunits. Required during male mating behavior for the response to hermaphrodite contact, acting with lov-1 and pkd-2. May be involved in polycystin signaling. The polypeptide is ATP synthase subunit beta, mitochondrial (Caenorhabditis elegans).